A 238-amino-acid chain; its full sequence is N-(5'-phosphoribosyl)anthranilate isomerase (238 aa).

The protein belongs to the TrpF family.

It carries out the reaction N-(5-phospho-beta-D-ribosyl)anthranilate = 1-(2-carboxyphenylamino)-1-deoxy-D-ribulose 5-phosphate. It participates in amino-acid biosynthesis; L-tryptophan biosynthesis; L-tryptophan from chorismate: step 3/5. This Methanosarcina acetivorans (strain ATCC 35395 / DSM 2834 / JCM 12185 / C2A) protein is N-(5'-phosphoribosyl)anthranilate isomerase.